A 474-amino-acid polypeptide reads, in one-letter code: Bifunctional protein HldE (474 aa).

The interval 1–318 is ribokinase; sequence MKLSMPRFDQ…RAIQREEGSE (318 aa). Residue 194–197 coordinates ATP; the sequence is NLSE. Asp263 is an active-site residue. Residues 343-474 are cytidylyltransferase; that stretch reads FTNGCFDILH…AIVEKIRGQG (132 aa).

The protein in the N-terminal section; belongs to the carbohydrate kinase PfkB family. This sequence in the C-terminal section; belongs to the cytidylyltransferase family. Homodimer.

It carries out the reaction D-glycero-beta-D-manno-heptose 7-phosphate + ATP = D-glycero-beta-D-manno-heptose 1,7-bisphosphate + ADP + H(+). The catalysed reaction is D-glycero-beta-D-manno-heptose 1-phosphate + ATP + H(+) = ADP-D-glycero-beta-D-manno-heptose + diphosphate. It functions in the pathway nucleotide-sugar biosynthesis; ADP-L-glycero-beta-D-manno-heptose biosynthesis; ADP-L-glycero-beta-D-manno-heptose from D-glycero-beta-D-manno-heptose 7-phosphate: step 1/4. It participates in nucleotide-sugar biosynthesis; ADP-L-glycero-beta-D-manno-heptose biosynthesis; ADP-L-glycero-beta-D-manno-heptose from D-glycero-beta-D-manno-heptose 7-phosphate: step 3/4. Its function is as follows. Catalyzes the phosphorylation of D-glycero-D-manno-heptose 7-phosphate at the C-1 position to selectively form D-glycero-beta-D-manno-heptose-1,7-bisphosphate. In terms of biological role, catalyzes the ADP transfer from ATP to D-glycero-beta-D-manno-heptose 1-phosphate, yielding ADP-D-glycero-beta-D-manno-heptose. The chain is Bifunctional protein HldE from Pseudomonas syringae pv. syringae (strain B728a).